Here is a 500-residue protein sequence, read N- to C-terminus: Pentatricopeptide repeat-containing protein At1g06580 (500 aa).

PPR repeat units lie at residues 78–112 (SIVDFSRLLIAIAKLNKYEAVISLFRHLEMLGISH), 113–147 (DLYSFTTLIDCFCRCARLSLALSCLGKMMKLGFEP), 148–182 (SIVTFGSLVNGFCHVNRFYEAMSLVDQIVGLGYEP), 183–217 (NVVIYNTIIDSLCEKGQVNTALDVLKHMKKMGIRP), 218–252 (DVVTYNSLITRLFHSGTWGVSARILSDMMRMGISP), 253–287 (DVITFSALIDVYGKEGQLLEAKKQYNEMIQRSVNP), 288–322 (NIVTYNSLINGLCIHGLLDEAKKVLNVLVSKGFFP), 323–357 (NAVTYNTLINGYCKAKRVDDGMKILCVMSRDGVDG), 358–392 (DTFTYNTLYQGYCQAGKFSAAEKVLGRMVSCGVHP), 393–427 (DMYTFNILLDGLCDHGKIGKALVRLEDLQKSKTVV), 428–462 (GIITYNIIIKGLCKADKVEDAWYLFCSLALKGVSP), and 463–498 (DVITYITMMIGLRRKRLWREAHELYRKMQKEDGLMP).

Belongs to the PPR family. P subfamily.

The chain is Pentatricopeptide repeat-containing protein At1g06580 from Arabidopsis thaliana (Mouse-ear cress).